The sequence spans 437 residues: 3-ketoacyl-CoA thiolase (437 aa).

C99 functions as the Acyl-thioester intermediate in the catalytic mechanism. Active-site proton acceptor residues include H392 and C422.

This sequence belongs to the thiolase-like superfamily. Thiolase family. As to quaternary structure, heterotetramer of two alpha chains (FadJ) and two beta chains (FadI).

Its subcellular location is the cytoplasm. It carries out the reaction an acyl-CoA + acetyl-CoA = a 3-oxoacyl-CoA + CoA. The protein operates within lipid metabolism; fatty acid beta-oxidation. In terms of biological role, catalyzes the final step of fatty acid oxidation in which acetyl-CoA is released and the CoA ester of a fatty acid two carbons shorter is formed. The protein is 3-ketoacyl-CoA thiolase of Pectobacterium carotovorum subsp. carotovorum (strain PC1).